Consider the following 427-residue polypeptide: Glutamate-1-semialdehyde 2,1-aminomutase (427 aa).

An N6-(pyridoxal phosphate)lysine modification is found at K267.

It belongs to the class-III pyridoxal-phosphate-dependent aminotransferase family. HemL subfamily. Homodimer. The cofactor is pyridoxal 5'-phosphate.

It localises to the cytoplasm. It carries out the reaction (S)-4-amino-5-oxopentanoate = 5-aminolevulinate. Its pathway is porphyrin-containing compound metabolism; protoporphyrin-IX biosynthesis; 5-aminolevulinate from L-glutamyl-tRNA(Glu): step 2/2. In Acetivibrio thermocellus (strain ATCC 27405 / DSM 1237 / JCM 9322 / NBRC 103400 / NCIMB 10682 / NRRL B-4536 / VPI 7372) (Clostridium thermocellum), this protein is Glutamate-1-semialdehyde 2,1-aminomutase.